Reading from the N-terminus, the 784-residue chain is Probable phosphoketolase (784 aa).

It belongs to the XFP family. Requires thiamine diphosphate as cofactor.

This is Probable phosphoketolase from Rhodopseudomonas palustris (strain BisB5).